Here is a 430-residue protein sequence, read N- to C-terminus: Enolase (430 aa).

Gln-163 provides a ligand contact to (2R)-2-phosphoglycerate. Glu-205 serves as the catalytic Proton donor. Mg(2+) contacts are provided by Asp-242, Glu-285, and Asp-312. The (2R)-2-phosphoglycerate site is built by Lys-337, Arg-366, Ser-367, and Lys-388. The active-site Proton acceptor is Lys-337.

Belongs to the enolase family. It depends on Mg(2+) as a cofactor.

It localises to the cytoplasm. Its subcellular location is the secreted. It is found in the cell surface. It carries out the reaction (2R)-2-phosphoglycerate = phosphoenolpyruvate + H2O. The protein operates within carbohydrate degradation; glycolysis; pyruvate from D-glyceraldehyde 3-phosphate: step 4/5. In terms of biological role, catalyzes the reversible conversion of 2-phosphoglycerate (2-PG) into phosphoenolpyruvate (PEP). It is essential for the degradation of carbohydrates via glycolysis. This is Enolase from Rubrobacter xylanophilus (strain DSM 9941 / JCM 11954 / NBRC 16129 / PRD-1).